Here is a 200-residue protein sequence, read N- to C-terminus: Recombination protein RecR (200 aa).

The C4-type zinc finger occupies 58–75 (CPDCFCLKTSKTSSCDFC). The 96-residue stretch at 82 to 177 (SFLCIVATPK…KISRLALGMP (96 aa)) folds into the Toprim domain.

It belongs to the RecR family.

Its function is as follows. May play a role in DNA repair. It seems to be involved in an RecBC-independent recombinational process of DNA repair. It may act with RecF and RecO. This Chlamydia muridarum (strain MoPn / Nigg) protein is Recombination protein RecR.